The sequence spans 1208 residues: Neural cell adhesion molecule L1-like protein (1208 aa).

The first 24 residues, 1 to 24 (MEPLLLGRGLIVYLMFLLLKFSKA), serve as a signal peptide directing secretion. At 25-1082 (IEIPSSVQQV…LYDDISTQGW (1058 aa)) the chain is on the extracellular side. 2 consecutive Ig-like C2-type domains span residues 35-124 (PTII…EEIE) and 128-223 (PSVP…MKLT). Intrachain disulfides connect Cys57-Cys109 and Cys153-Cys204. N-linked (GlcNAc...) asparagine glycosylation is found at Lys231 and Asn299. Ig-like C2-type domains lie at 235-328 (PKLL…VIVE), 331-417 (PRWT…ANID), 423-510 (PLIQ…ANLD), and 515-607 (TKLR…TQVT). 4 cysteine pairs are disulfide-bonded: Cys262/Cys310, Cys352/Cys401, Cys445/Cys494, and Cys536/Cys591. Residues Asn476 and Asn482 are each glycosylated (N-linked (GlcNAc...) asparagine). A DGEA motif is present at residues 555–558 (DGEA). Residues Asn562 and Asn580 are each glycosylated (N-linked (GlcNAc...) asparagine). Fibronectin type-III domains follow at residues 614–709 (PPEN…TPPA), 714–807 (NPQN…SGED), 809–914 (PDTA…TPEG), and 918–1015 (QPTF…LGEG). The tract at residues 693–716 (GRSQPSQPSDHHETPPAAPDRNPQ) is disordered. Residues Asn767, Asn822, Asn945, and Asn1026 are each glycosylated (N-linked (GlcNAc...) asparagine). A helical transmembrane segment spans residues 1083–1103 (FIGLMCAIALLTLLLLTVCFV). Residues 1104–1208 (KRNRGGKYSV…SSTATFPLRA (105 aa)) lie on the Cytoplasmic side of the membrane. Positions 1131-1163 (ETFGEYSDSDEKPLKGSLRSLNRDMQPTESADS) are disordered. Phosphoserine is present on residues Ser1147, Ser1160, and Ser1180. Residues 1149-1161 (RSLNRDMQPTESA) show a composition bias toward polar residues. An FIG[AQ]Y motif is present at residues 1181 to 1185 (FIGAY). Residues 1189–1208 (KEKGSVESNGSSTATFPLRA) form a disordered region. Residues 1194-1208 (VESNGSSTATFPLRA) show a composition bias toward polar residues.

The protein belongs to the immunoglobulin superfamily. L1/neurofascin/NgCAM family. May interact with L1CAM. May interact with ITGB1/ITGA1 heterodimer and ITGB1/ITGA2 heterodimer as well as with ANK3. In terms of processing, cleavage by metalloprotease ADAM8 in the extracellular part generates 2 soluble forms (125 kDa and 165 kDa) in vitro and is inhibited by metalloprotease inhibitors. Cleaved by BACE1. N-glycosylated. Contains N-linked oligosaccharides with a sulfated carbohydrate structure type HNK-1 (SO4-3-GlcUABeta1,3GalBeta1,4GlcNAc). Post-translationally, O-glycosylated. In terms of tissue distribution, expressed in the fetal and adult brain as well as in Schwann cell culture. Also detected in adult peripheral tissues.

The protein resides in the cell membrane. Its subcellular location is the secreted. It localises to the extracellular space. The protein localises to the extracellular matrix. Functionally, extracellular matrix and cell adhesion protein that plays a role in nervous system development and in synaptic plasticity. Both soluble and membranous forms promote neurite outgrowth of cerebellar and hippocampal neurons and suppress neuronal cell death. Plays a role in neuronal positioning of pyramidal neurons and in regulation of both the number of interneurons and the efficacy of GABAergic synapses. May play a role in regulating cell migration in nerve regeneration and cortical development. Potentiates integrin-dependent cell migration towards extracellular matrix proteins. Recruits ANK3 to the plasma membrane. This chain is Neural cell adhesion molecule L1-like protein (CHL1), found in Homo sapiens (Human).